The primary structure comprises 274 residues: Serine/threonine-protein kinase 1 (274 aa).

A Protein kinase domain is found at 16 to 273 (AVLAPKVVNG…HSFLASRHDY (258 aa)). ATP-binding positions include 22 to 30 (VVNGRFGKM) and Lys-46. The active-site Proton acceptor is Asp-134.

It belongs to the protein kinase superfamily. Ser/Thr protein kinase family.

It carries out the reaction L-seryl-[protein] + ATP = O-phospho-L-seryl-[protein] + ADP + H(+). The catalysed reaction is L-threonyl-[protein] + ATP = O-phospho-L-threonyl-[protein] + ADP + H(+). The chain is Serine/threonine-protein kinase 1 (PK1) from Orgyia pseudotsugata multicapsid polyhedrosis virus (OpMNPV).